The chain runs to 351 residues: MVPMDRLLQIVRRFEFLEARLSAGAAPAEIAALSREYAELKPVVVEISAYRTALEDLAEAEAMLSDPEMRALAEDEIPALRARIPGMEQALRLALLPKDAADARPAILEIRPGTGGEEAALFAGDLLRMYQRYAEGQGWRFELLDLAPSELGGIREATARVEGEGAFARLKYESGVHRVQRVPETEAQGRIHTSAATVAVLPEAEEVDLEIPAADLRIDTMRSSGAGGQHVNTTDSAVRITHLPTGIIVTSSEKSQHRNREIAMQVLRARLYDLERQRLADARSADRKAQVGSGDRSERIRTYNFPQGRMTDHRINLTLYALPQIMAGDLSEVISALTAHDQAARLAEMEA.

Glutamine 229 is subject to N5-methylglutamine.

This sequence belongs to the prokaryotic/mitochondrial release factor family. Methylated by PrmC. Methylation increases the termination efficiency of RF1.

It localises to the cytoplasm. Functionally, peptide chain release factor 1 directs the termination of translation in response to the peptide chain termination codons UAG and UAA. The polypeptide is Peptide chain release factor 1 (Cereibacter sphaeroides (strain KD131 / KCTC 12085) (Rhodobacter sphaeroides)).